A 384-amino-acid chain; its full sequence is DNA polymerase IV (384 aa).

Positions 5–182 (IIHVDMDAFF…LPVTKVHGIG (178 aa)) constitute a UmuC domain. Positions 9, 10, and 103 each coordinate Mg(2+). The active site involves glutamate 104.

The protein belongs to the DNA polymerase type-Y family. Monomer. It depends on Mg(2+) as a cofactor.

The protein resides in the cytoplasm. The enzyme catalyses DNA(n) + a 2'-deoxyribonucleoside 5'-triphosphate = DNA(n+1) + diphosphate. Functionally, poorly processive, error-prone DNA polymerase involved in translesion repair and untargeted mutagenesis. Copies undamaged DNA at stalled replication forks, which arise in vivo from mismatched or misaligned primer ends. These misaligned primers can be extended by PolIV. Exhibits no 3'-5' exonuclease (proofreading) activity. Involved in translesional synthesis. Primer extension fidelity in vitro is temperature-dependent. Inserts a correct base opposite templating bases at 70 degrees Celsius, but at 37 degrees Celsius in addition to correct base pairing, base transitions, transversions and frameshifts can occur. Preferably forms erroneous base pairs C:T. Bypasses 8-oxo-dG oxidative damage by incorporating dATP or dCTP opposite of the damaged DNA template site at both temperatures in vitro. The chain is DNA polymerase IV from Caldanaerobacter subterraneus subsp. tengcongensis (strain DSM 15242 / JCM 11007 / NBRC 100824 / MB4) (Thermoanaerobacter tengcongensis).